The sequence spans 86 residues: High affinity immunoglobulin epsilon receptor subunit gamma (86 aa).

A signal peptide spans Met-1–Ala-18. Topologically, residues Leu-19–Gln-23 are extracellular. The helical transmembrane segment at Leu-24 to Cys-44 threads the bilayer. Residues Arg-45–Gln-86 are Cytoplasmic-facing. Residues Ala-54–Glu-82 enclose the ITAM domain. Tyr-65 is subject to Phosphotyrosine. Position 69 is a phosphoserine (Ser-69). A Phosphotyrosine modification is found at Tyr-76. Phosphothreonine is present on Thr-78.

Belongs to the CD3Z/FCER1G family. As to quaternary structure, igE Fc receptor is a tetramer of an alpha chain, a beta chain, and two disulfide linked gamma chains. Associates with FCGR1A; forms a functional signaling complex. The signaling subunit of immunoglobulin gamma (IgG) Fc receptor complex. As a homodimer or a heterodimer of CD247 and FCER1G, associates with the ligand binding subunit FCGR3A to form a functional receptor complex. Associates with CLEC6A. Interacts with CLEC4E. Interacts (via ITAM domain) with SYK (via SH2 domains); activates SYK, enabling integrin-mediated activation of neutrophils and macrophages. Interacts with CSF2RB and recruits SYK in response to IL3 stimulation; this interaction is direct. Interacts with CD300LH; the interaction may be indirect. Interacts with CD300LD. Interacts with TARM1.

Its subcellular location is the cell membrane. Its function is as follows. Adapter protein containing an immunoreceptor tyrosine-based activation motif (ITAM) that transduces activation signals from various immunoreceptors. As a component of the high-affinity immunoglobulin E (IgE) receptor, mediates allergic inflammatory signaling in mast cells. As a constitutive component of interleukin-3 receptor complex, selectively mediates interleukin 4/IL4 production by basophils priming T-cells toward effector T-helper 2 subset. Associates with pattern recognition receptors CLEC4D and CLEC4E to form a functional signaling complex in myeloid cells. Binding of mycobacterial trehalose 6,6'-dimycolate (TDM) to this receptor complex leads to phosphorylation of ITAM, triggering activation of SYK, CARD9 and NF-kappa-B, consequently driving maturation of antigen-presenting cells and shaping antigen-specific priming of T-cells toward effector T-helper 1 and T-helper 17 cell subtypes. May function cooperatively with other activating receptors. Functionally linked to integrin beta-2/ITGB2-mediated neutrophil activation. Also involved in integrin alpha-2/ITGA2-mediated platelet activation. This chain is High affinity immunoglobulin epsilon receptor subunit gamma (FCER1G), found in Macaca fascicularis (Crab-eating macaque).